Consider the following 531-residue polypeptide: 2-isopropylmalate synthase (531 aa).

The Pyruvate carboxyltransferase domain maps to 8–284 (IIIFDTTLRD…LTNIDTKQIY (277 aa)). Residues Asp17, His208, His210, and Asn244 each contribute to the Mn(2+) site. The tract at residues 408–531 (RVELVQVSCG…TQDKQTEVTA (124 aa)) is regulatory domain.

It belongs to the alpha-IPM synthase/homocitrate synthase family. LeuA type 1 subfamily. Homodimer. Requires Mn(2+) as cofactor.

The protein resides in the cytoplasm. It catalyses the reaction 3-methyl-2-oxobutanoate + acetyl-CoA + H2O = (2S)-2-isopropylmalate + CoA + H(+). It participates in amino-acid biosynthesis; L-leucine biosynthesis; L-leucine from 3-methyl-2-oxobutanoate: step 1/4. In terms of biological role, catalyzes the condensation of the acetyl group of acetyl-CoA with 3-methyl-2-oxobutanoate (2-ketoisovalerate) to form 3-carboxy-3-hydroxy-4-methylpentanoate (2-isopropylmalate). The chain is 2-isopropylmalate synthase from Trichormus variabilis (strain ATCC 29413 / PCC 7937) (Anabaena variabilis).